Consider the following 67-residue polypeptide: Small ribosomal subunit protein eS27 (67 aa).

Zn(2+) contacts are provided by C22, C25, C41, and C44. The C4-type zinc finger occupies 22–44 (CPDCGNEQVTFSHAAMVVRCLVC).

Belongs to the eukaryotic ribosomal protein eS27 family. In terms of assembly, part of the 30S ribosomal subunit. The cofactor is Zn(2+).

This is Small ribosomal subunit protein eS27 from Pyrobaculum neutrophilum (strain DSM 2338 / JCM 9278 / NBRC 100436 / V24Sta) (Thermoproteus neutrophilus).